We begin with the raw amino-acid sequence, 81 residues long: Escargot/snail protein homolog (81 aa).

4 consecutive C2H2-type zinc fingers follow at residues 1–5 (HQQFH), 17–39 (FSCK…IRTH), 43–65 (CKCH…IRTH), and 71–81 (FSCQHCNRAFA).

The protein belongs to the snail C2H2-type zinc-finger protein family.

The protein resides in the nucleus. This is Escargot/snail protein homolog from Apis mellifera (Honeybee).